The sequence spans 186 residues: Peptidyl-tRNA hydrolase (186 aa).

Tyr14 lines the tRNA pocket. The active-site Proton acceptor is the His19. TRNA is bound by residues Phe65, Asn67, and Asn113.

This sequence belongs to the PTH family. As to quaternary structure, monomer.

Its subcellular location is the cytoplasm. It carries out the reaction an N-acyl-L-alpha-aminoacyl-tRNA + H2O = an N-acyl-L-amino acid + a tRNA + H(+). In terms of biological role, hydrolyzes ribosome-free peptidyl-tRNAs (with 1 or more amino acids incorporated), which drop off the ribosome during protein synthesis, or as a result of ribosome stalling. Catalyzes the release of premature peptidyl moieties from peptidyl-tRNA molecules trapped in stalled 50S ribosomal subunits, and thus maintains levels of free tRNAs and 50S ribosomes. The sequence is that of Peptidyl-tRNA hydrolase from Limosilactobacillus fermentum (strain NBRC 3956 / LMG 18251) (Lactobacillus fermentum).